We begin with the raw amino-acid sequence, 167 residues long: Endoribonuclease YbeY (167 aa).

3 residues coordinate Zn(2+): His131, His135, and His141.

The protein belongs to the endoribonuclease YbeY family. Zn(2+) is required as a cofactor.

It is found in the cytoplasm. Single strand-specific metallo-endoribonuclease involved in late-stage 70S ribosome quality control and in maturation of the 3' terminus of the 16S rRNA. This is Endoribonuclease YbeY from Rickettsia prowazekii (strain Madrid E).